The following is a 109-amino-acid chain: Probable gas vesicle protein J1 (109 aa).

It belongs to the gas vesicle GvpA family. In terms of assembly, interacts with GvpA.

It localises to the gas vesicle. A minor component of the gas vesicle, might be involved in nucleating gas vesicle formation. Gas vesicles (GV) are hollow, gas filled proteinaceous nanostructures. It is not clear what function GVs perform in soil bacteria. This is Probable gas vesicle protein J1 (gvpJ1) from Streptomyces coelicolor (strain ATCC BAA-471 / A3(2) / M145).